A 112-amino-acid chain; its full sequence is Photosystem II reaction center Psb28 protein (112 aa).

It belongs to the Psb28 family. As to quaternary structure, part of the photosystem II complex.

Its subcellular location is the plastid. The protein resides in the cyanelle thylakoid membrane. The sequence is that of Photosystem II reaction center Psb28 protein from Cyanophora paradoxa.